Reading from the N-terminus, the 628-residue chain is DNA-directed RNA polymerase III subunit RPC3 (628 aa).

The span at 360-383 (EVDGEASADEDEGEDESSEESDYD) shows a compositional bias: acidic residues. The segment at 360-422 (EVDGEASADE…SAAPKERRMD (63 aa)) is disordered. The span at 390–406 (TTHGTNGVNGTNGTNGT) shows a compositional bias: low complexity. Residues 408-422 (VKFDESAAPKERRMD) are compositionally biased toward basic and acidic residues. The interval 555 to 576 (GYVTMVHCLQVLEALRRKERDV) is leucine-zipper.

The protein belongs to the RNA polymerase beta chain family. In terms of assembly, component of the RNA polymerase III (Pol III) complex consisting of 17 subunits.

Its subcellular location is the nucleus. DNA-dependent RNA polymerase catalyzes the transcription of DNA into RNA using the four ribonucleoside triphosphates as substrates. Specific core component of RNA polymerase III which synthesizes small RNAs, such as 5S rRNA and tRNAs. This chain is DNA-directed RNA polymerase III subunit RPC3 (RPC82), found in Chaetomium globosum (strain ATCC 6205 / CBS 148.51 / DSM 1962 / NBRC 6347 / NRRL 1970) (Soil fungus).